Reading from the N-terminus, the 786-residue chain is Protein SEY1 (786 aa).

The Cytoplasmic segment spans residues 1 to 684 (MSDLKEAIQL…KRSIVNTTER (684 aa)). A GB1/RHD3-type G domain is found at 35–262 (GVKYHVISVF…QDASFFKDEY (228 aa)). 45–52 (GSQSSGKS) is a GTP binding site. Positions 355–375 (KKVYEERRDDLIKQLNTIIDE) form a coiled coil. The helical transmembrane segment at 685–705 (IPLYMYALVVALGWGRIITIL) threads the bilayer. Residues 706 to 708 (RNP) lie on the Lumenal side of the membrane. A helical membrane pass occupies residues 709 to 729 (ATIILSIIVLAGAYFVHKLNL). The Cytoplasmic segment spans residues 730-786 (WGPLLQFANQATGQATAVLKQTVRSLVVDEEPKRKILVEPHESEGVDKEPSKNDQHL). The interval 765–786 (ILVEPHESEGVDKEPSKNDQHL) is disordered.

Belongs to the TRAFAC class dynamin-like GTPase superfamily. GB1/RHD3 GTPase family. RHD3 subfamily.

The protein resides in the endoplasmic reticulum membrane. In terms of biological role, cooperates with the reticulon proteins and tubule-shaping DP1 family proteins to generate and maintain the structure of the tubular endoplasmic reticulum network. Has GTPase activity, which is required for its function in ER organization. This is Protein SEY1 from Kluyveromyces lactis (strain ATCC 8585 / CBS 2359 / DSM 70799 / NBRC 1267 / NRRL Y-1140 / WM37) (Yeast).